Consider the following 310-residue polypeptide: Malate dehydrogenase (310 aa).

Residues 7–12 and Asp-32 each bind NAD(+); that span reads GAGNVG. Substrate-binding residues include Arg-81 and Arg-87. NAD(+) is bound by residues Asn-94 and 117–119; that span reads VSN. The substrate site is built by Asn-119 and Arg-150. His-174 acts as the Proton acceptor in catalysis.

It belongs to the LDH/MDH superfamily. MDH type 3 family. In terms of assembly, homotetramer; arranged as a dimer of dimers.

It catalyses the reaction (S)-malate + NAD(+) = oxaloacetate + NADH + H(+). Catalyzes the reversible oxidation of malate to oxaloacetate. This is Malate dehydrogenase from Prosthecochloris vibrioformis (Chlorobium vibrioforme).